The sequence spans 1097 residues: Transmembrane protein 132D (1097 aa).

Positions 1-30 are cleaved as a signal peptide; that stretch reads MCPSEMGTLWYLWSPVLISLAALFSKVTEG. The Extracellular segment spans residues 31–913; that stretch reads RGILESIQRF…LDQAAKGLSD (883 aa). Positions 233–245 are enriched in basic and acidic residues; the sequence is DERGDCAKEDSRK. The segment at 233-263 is disordered; the sequence is DERGDCAKEDSRKSGGTPAGHNDVDESSPPL. The helical transmembrane segment at 914 to 934 threads the bilayer; it reads LEIGMYALLGVFCLAILVFLI. The Cytoplasmic portion of the chain corresponds to 935–1097; that stretch reads NCVTFALKYR…SCMERLHEHV (163 aa). Residues 1021–1042 are disordered; the sequence is MLTDDQEQKSEPPTSPTSKRKR.

This sequence belongs to the TMEM132 family. Expressed in mature oligodendrocytes in the white and gray matter of the brain.

The protein localises to the membrane. Functionally, regulates neuronal morphology via inhibition of the WAVE regulatory complex (WCR), a complex that controls F-actin cytoskeletal dynamics. The polypeptide is Transmembrane protein 132D (Tmem132d) (Mus musculus (Mouse)).